The following is a 92-amino-acid chain: Cell division protein FtsB (92 aa).

Topologically, residues 1–3 (MRL) are cytoplasmic. Residues 4-21 (FIFLLVAVLLLFQYDFWF) form a helical membrane-spanning segment. The Periplasmic segment spans residues 22-92 (GKNGYLDYKR…IFYHIVKEQK (71 aa)). Positions 26-74 (YLDYKRTAQQIAQHKQENEKLSQRNQVVAAEIKDLKQGVEAIEERARFQ) form a coiled coil.

Belongs to the FtsB family. As to quaternary structure, part of a complex composed of FtsB, FtsL and FtsQ.

The protein localises to the cell inner membrane. Essential cell division protein. May link together the upstream cell division proteins, which are predominantly cytoplasmic, with the downstream cell division proteins, which are predominantly periplasmic. The protein is Cell division protein FtsB of Pasteurella multocida (strain Pm70).